The chain runs to 872 residues: Leucine--tRNA ligase (872 aa).

Positions Pro-42 to His-52 match the 'HIGH' region motif. The 'KMSKS' region motif lies at Thr-634–Ser-638. Residue Lys-637 coordinates ATP.

It belongs to the class-I aminoacyl-tRNA synthetase family.

The protein localises to the cytoplasm. The enzyme catalyses tRNA(Leu) + L-leucine + ATP = L-leucyl-tRNA(Leu) + AMP + diphosphate. This chain is Leucine--tRNA ligase, found in Trichormus variabilis (strain ATCC 29413 / PCC 7937) (Anabaena variabilis).